The primary structure comprises 474 residues: Dihydrolipoyl dehydrogenase (474 aa).

FAD contacts are provided by residues 36–44 (EAKDMGGTC), K53, and G119. A disulfide bridge links C44 with C49. Residues 184–188 (GSGYI), E207, and 275–278 (ATGR) each bind NAD(+). Positions 323 and 331 each coordinate FAD. Residue H459 is the Proton acceptor of the active site.

It belongs to the class-I pyridine nucleotide-disulfide oxidoreductase family. As to quaternary structure, homodimer. FAD is required as a cofactor.

It localises to the cell inner membrane. The enzyme catalyses N(6)-[(R)-dihydrolipoyl]-L-lysyl-[protein] + NAD(+) = N(6)-[(R)-lipoyl]-L-lysyl-[protein] + NADH + H(+). Functionally, lipoamide dehydrogenase is a component of the alpha-ketoacid dehydrogenase complexes. This Synechocystis sp. (strain ATCC 27184 / PCC 6803 / Kazusa) protein is Dihydrolipoyl dehydrogenase (lpdA).